A 420-amino-acid polypeptide reads, in one-letter code: 3-phosphoshikimate 1-carboxyvinyltransferase (420 aa).

The 3-phosphoshikimate site is built by K20, S21, and R25. K20 provides a ligand contact to phosphoenolpyruvate. Position 119 (R119) interacts with phosphoenolpyruvate. 3-phosphoshikimate-binding residues include S161, S162, Q163, S189, D303, Q326, and K330. Residue Q163 coordinates phosphoenolpyruvate. Catalysis depends on D303, which acts as the Proton acceptor. R334, R375, and K400 together coordinate phosphoenolpyruvate.

This sequence belongs to the EPSP synthase family. As to quaternary structure, monomer.

It is found in the cytoplasm. The enzyme catalyses 3-phosphoshikimate + phosphoenolpyruvate = 5-O-(1-carboxyvinyl)-3-phosphoshikimate + phosphate. It functions in the pathway metabolic intermediate biosynthesis; chorismate biosynthesis; chorismate from D-erythrose 4-phosphate and phosphoenolpyruvate: step 6/7. Its function is as follows. Catalyzes the transfer of the enolpyruvyl moiety of phosphoenolpyruvate (PEP) to the 5-hydroxyl of shikimate-3-phosphate (S3P) to produce enolpyruvyl shikimate-3-phosphate and inorganic phosphate. This is 3-phosphoshikimate 1-carboxyvinyltransferase from Dehalococcoides mccartyi (strain ATCC BAA-2266 / KCTC 15142 / 195) (Dehalococcoides ethenogenes (strain 195)).